The sequence spans 255 residues: Thiazole synthase (255 aa).

K96 (schiff-base intermediate with DXP) is an active-site residue. 1-deoxy-D-xylulose 5-phosphate is bound by residues G157, A183–G184, and N205–T206.

It belongs to the ThiG family. As to quaternary structure, homotetramer. Forms heterodimers with either ThiH or ThiS.

Its subcellular location is the cytoplasm. It catalyses the reaction [ThiS sulfur-carrier protein]-C-terminal-Gly-aminoethanethioate + 2-iminoacetate + 1-deoxy-D-xylulose 5-phosphate = [ThiS sulfur-carrier protein]-C-terminal Gly-Gly + 2-[(2R,5Z)-2-carboxy-4-methylthiazol-5(2H)-ylidene]ethyl phosphate + 2 H2O + H(+). The protein operates within cofactor biosynthesis; thiamine diphosphate biosynthesis. Its function is as follows. Catalyzes the rearrangement of 1-deoxy-D-xylulose 5-phosphate (DXP) to produce the thiazole phosphate moiety of thiamine. Sulfur is provided by the thiocarboxylate moiety of the carrier protein ThiS. In vitro, sulfur can be provided by H(2)S. The sequence is that of Thiazole synthase from Heliobacterium modesticaldum (strain ATCC 51547 / Ice1).